Reading from the N-terminus, the 118-residue chain is Small ribosomal subunit protein uS13 (118 aa).

Residues 94–118 (SLPVRGQRTKTNARTRKGPRKPIKK) are disordered.

The protein belongs to the universal ribosomal protein uS13 family. Part of the 30S ribosomal subunit. Forms a loose heterodimer with protein S19. Forms two bridges to the 50S subunit in the 70S ribosome.

In terms of biological role, located at the top of the head of the 30S subunit, it contacts several helices of the 16S rRNA. In the 70S ribosome it contacts the 23S rRNA (bridge B1a) and protein L5 of the 50S subunit (bridge B1b), connecting the 2 subunits; these bridges are implicated in subunit movement. Contacts the tRNAs in the A and P-sites. The polypeptide is Small ribosomal subunit protein uS13 (Haemophilus influenzae (strain 86-028NP)).